Consider the following 1839-residue polypeptide: Nuclear pore complex protein DDB_G0274915 (1839 aa).

Polar residues-rich tracts occupy residues 1–27 and 35–54; these read MNGR…NTIN and NGSL…QTNK. 10 disordered regions span residues 1 to 54, 78 to 150, 325 to 367, 480 to 568, 589 to 636, 657 to 705, 739 to 810, 818 to 837, 846 to 1106, and 1129 to 1839; these read MNGR…QTNK, DESS…ISDD, KQFD…PNAD, PLNK…FSTT, TTIA…GGGV, VSTS…DVPG, TTTT…DSKT, PTTE…SSLF, TTPS…FSSN, and TTAT…AKKK. Residues 80 to 90 show a composition bias toward low complexity; that stretch reads SSSSSSSSSSS. Residues 91-101 are compositionally biased toward polar residues; the sequence is YDDGNNIPQKG. Composition is skewed to low complexity over residues 102–148 and 329–343; these read SSTT…INIS and DNNN…SIYN. The span at 344–354 shows a compositional bias: polar residues; that stretch reads RQSIYSPNSKI. Composition is skewed to low complexity over residues 495–568 and 589–607; these read TYAT…FSTT and TTIA…SSSS. The span at 616–628 shows a compositional bias: polar residues; that stretch reads MFTSDSNKSNLFS. 2 stretches are compositionally biased toward low complexity: residues 658-671 and 739-760; these read STST…SKSS and TTTT…TTDK. Over residues 761–773 the composition is skewed to basic and acidic residues; sequence SSADKSSADKSST. Composition is skewed to low complexity over residues 774–803, 827–837, and 846–871; these read DKST…TTTT, PTTSLTSSSLF, and TTPS…NTTT. Acidic residues-rich tracts occupy residues 896–923 and 944–958; these read ESDE…EAEE and LEAE…DSDE. 2 stretches are compositionally biased toward low complexity: residues 1005–1021 and 1046–1060; these read GSSL…SFLT and SSSS…IPTT. Over residues 1061-1070 the composition is skewed to basic and acidic residues; the sequence is SKKEKIDDKP. Low complexity predominate over residues 1071–1092; that stretch reads STTTTTTTTSLFGSTTTSGLFS. The segment covering 1093–1106 has biased composition (polar residues); that stretch reads NPSTTSTGSLFSSN. Composition is skewed to low complexity over residues 1129 to 1242 and 1250 to 1292; these read TTAT…FGST and ATTT…GLFG. Positions 1293–1310 are enriched in polar residues; it reads ASSSTTPSTGLFGSATTP. Composition is skewed to low complexity over residues 1311–1384 and 1397–1498; these read STGL…TTPP and LFGT…TTAT. Positions 1507–1521 are enriched in polar residues; it reads TAPSTGLFGSTTATN. Positions 1522–1673 are enriched in low complexity; that stretch reads PSTGLFGSTT…SSTPFGASPF (152 aa). Over residues 1676–1708 the composition is skewed to polar residues; it reads PTSTSSPPFGAPTSASSTPFGAPQISTSSSTNL. Residues 1712–1810 are compositionally biased toward low complexity; that stretch reads ASSSTAAPSF…PFGSTPSTAP (99 aa).

This is Nuclear pore complex protein DDB_G0274915 from Dictyostelium discoideum (Social amoeba).